The chain runs to 298 residues: Probable endonuclease 4 (298 aa).

Residues histidine 69, histidine 111, glutamate 146, aspartate 180, histidine 183, histidine 215, aspartate 228, histidine 230, and glutamate 260 each coordinate Zn(2+).

The protein belongs to the AP endonuclease 2 family. It depends on Zn(2+) as a cofactor.

The enzyme catalyses Endonucleolytic cleavage to 5'-phosphooligonucleotide end-products.. Functionally, endonuclease IV plays a role in DNA repair. It cleaves phosphodiester bonds at apurinic or apyrimidinic (AP) sites, generating a 3'-hydroxyl group and a 5'-terminal sugar phosphate. This chain is Probable endonuclease 4, found in Bacillus cytotoxicus (strain DSM 22905 / CIP 110041 / 391-98 / NVH 391-98).